The following is a 324-amino-acid chain: MAQPNQPTPQFQMAQIPLAAFFDNNESKTMLNSMNLRLNDMDLKLSLILELLATRLPDQRLPSIFTSPPQTVISEAPPQSFTPSATNSTSDKTSSSLKTELKTEDSDGDLDMEGEEDTEELFDNESQPSQRNQSPKETEVEDEKVLADGPFPEGAVKRAAEKAARSFQSTQPKVFAWQILRESVTDDELRNVQISLRTFHGETADHLLGRQLPKIRLVVEATMKYFKWDLLSTESQLSKAKLILSHLKNNAKVRNWTLREGRPNRVAPATPPVNVDLVWKRYLALLGPAGFTGILPNLPQNLCNGGTQSPSIPQIDPSLFKVDA.

The span at 67-85 (SPPQTVISEAPPQSFTPSA) shows a compositional bias: polar residues. Residues 67-151 (SPPQTVISEA…DEKVLADGPF (85 aa)) are disordered. The span at 86–98 (TNSTSDKTSSSLK) shows a compositional bias: low complexity. Acidic residues predominate over residues 106–123 (SDGDLDMEGEEDTEELFD). A compositionally biased stretch (polar residues) spans 124-133 (NESQPSQRNQ). Residues 134-146 (SPKETEVEDEKVL) show a composition bias toward basic and acidic residues.

As to quaternary structure, multimer. May interact with mediator complex subunit mdt-29. As to expression, widely expressed, including in pharyngeal muscle cells and body wall muscle cells.

It localises to the nucleus. Its function is as follows. Putative transcription factor. Positive regulator of the lin-12/Notch signaling pathway. Binds to specific DNA sequences in regulatory elements. Involved in cell fate decisions that require cell-cell interactions, such as the anchor cell (AC) / ventral uterine (VU) precursor cell fate decision. Heterochronic protein which controls the choice of stage specific cell fates, including the larval L3 stage-specific fate of seam cells. Involved in regulating the temporal expression pattern of hunchback-like protein hbl-1, thereby playing a role in the progression between larval stages L2 and L3. This is Putative transcription factor sel-7 from Caenorhabditis elegans.